The chain runs to 91 residues: Small ribosomal subunit protein uS19 (91 aa).

Belongs to the universal ribosomal protein uS19 family.

Functionally, protein S19 forms a complex with S13 that binds strongly to the 16S ribosomal RNA. The sequence is that of Small ribosomal subunit protein uS19 from Actinobacillus pleuropneumoniae serotype 7 (strain AP76).